The sequence spans 686 residues: DNA ligase 1 (686 aa).

NAD(+) contacts are provided by residues 35–39 (DFEYD), 84–85 (SL), and E119. K121 (N6-AMP-lysine intermediate) is an active-site residue. NAD(+)-binding residues include R142, E177, K293, and K317. Zn(2+) is bound by residues C411, C414, C429, and C434. Residues 602–686 (RVGEQLAGLT…LAEKGAPPLP (85 aa)) enclose the BRCT domain.

Belongs to the NAD-dependent DNA ligase family. LigA subfamily. Mg(2+) is required as a cofactor. Mn(2+) serves as cofactor.

It catalyses the reaction NAD(+) + (deoxyribonucleotide)n-3'-hydroxyl + 5'-phospho-(deoxyribonucleotide)m = (deoxyribonucleotide)n+m + AMP + beta-nicotinamide D-nucleotide.. DNA ligase that catalyzes the formation of phosphodiester linkages between 5'-phosphoryl and 3'-hydroxyl groups in double-stranded DNA using NAD as a coenzyme and as the energy source for the reaction. It is essential for DNA replication and repair of damaged DNA. This is DNA ligase 1 from Deinococcus deserti (strain DSM 17065 / CIP 109153 / LMG 22923 / VCD115).